Consider the following 150-residue polypeptide: MVRLAIVVAEFNYDITQLMLQKAVEHAKFLGAEITYIVKTPGVYDIPMILKELVAKEEVDAVATLGAVIQGATKHDELVATQAARKILDIAVESGKPITLGIIGHGANRIQALERVEEYARRAVEAAVKMARRKKALREAKYNGSTVYID.

5-amino-6-(D-ribitylamino)uracil-binding positions include Phe-11, 43 to 45 (VYD), and 67 to 69 (AVI). Position 72–73 (72–73 (AT)) interacts with (2S)-2-hydroxy-3-oxobutyl phosphate. The active-site Proton donor is the His-75. Leu-100 provides a ligand contact to 5-amino-6-(D-ribitylamino)uracil. Arg-115 contributes to the (2S)-2-hydroxy-3-oxobutyl phosphate binding site.

Belongs to the DMRL synthase family.

The enzyme catalyses (2S)-2-hydroxy-3-oxobutyl phosphate + 5-amino-6-(D-ribitylamino)uracil = 6,7-dimethyl-8-(1-D-ribityl)lumazine + phosphate + 2 H2O + H(+). The protein operates within cofactor biosynthesis; riboflavin biosynthesis; riboflavin from 2-hydroxy-3-oxobutyl phosphate and 5-amino-6-(D-ribitylamino)uracil: step 1/2. Its function is as follows. Catalyzes the formation of 6,7-dimethyl-8-ribityllumazine by condensation of 5-amino-6-(D-ribitylamino)uracil with 3,4-dihydroxy-2-butanone 4-phosphate. This is the penultimate step in the biosynthesis of riboflavin. This is 6,7-dimethyl-8-ribityllumazine synthase from Pyrobaculum aerophilum (strain ATCC 51768 / DSM 7523 / JCM 9630 / CIP 104966 / NBRC 100827 / IM2).